Here is a 609-residue protein sequence, read N- to C-terminus: UvrABC system protein C (609 aa).

The GIY-YIG domain maps to 16-94; that stretch reads SSPGVYRMYD…IKQYMPRYNV (79 aa). One can recognise a UVR domain in the interval 203–238; that stretch reads LQVMTELVSKMEASALALEYEQAASYRDQIAALRRV.

It belongs to the UvrC family. Interacts with UvrB in an incision complex.

The protein resides in the cytoplasm. Functionally, the UvrABC repair system catalyzes the recognition and processing of DNA lesions. UvrC both incises the 5' and 3' sides of the lesion. The N-terminal half is responsible for the 3' incision and the C-terminal half is responsible for the 5' incision. The polypeptide is UvrABC system protein C (Shewanella sediminis (strain HAW-EB3)).